We begin with the raw amino-acid sequence, 662 residues long: Glycogen debranching enzyme (662 aa).

Asp338 acts as the Nucleophile in catalysis. Residue Glu373 is the Proton donor of the active site.

It belongs to the glycosyl hydrolase 13 family.

It carries out the reaction Hydrolysis of (1-&gt;6)-alpha-D-glucosidic linkages to branches with degrees of polymerization of three or four glucose residues in limit dextrin.. It functions in the pathway glycan degradation; glycogen degradation. Removes maltotriose and maltotetraose chains that are attached by 1,6-alpha-linkage to the limit dextrin main chain, generating a debranched limit dextrin. This Yersinia pseudotuberculosis serotype O:1b (strain IP 31758) protein is Glycogen debranching enzyme.